The chain runs to 463 residues: L-seryl-tRNA(Sec) selenium transferase (463 aa).

Lysine 295 bears the N6-(pyridoxal phosphate)lysine mark.

It belongs to the SelA family. Homodecamer; pentamer of dimers. Binds only one seryl-tRNA(Sec) per dimer. Pyridoxal 5'-phosphate is required as a cofactor.

The protein localises to the cytoplasm. It carries out the reaction L-seryl-tRNA(Sec) + selenophosphate + H(+) = L-selenocysteinyl-tRNA(Sec) + phosphate. Its pathway is aminoacyl-tRNA biosynthesis; selenocysteinyl-tRNA(Sec) biosynthesis; selenocysteinyl-tRNA(Sec) from L-seryl-tRNA(Sec) (bacterial route): step 1/1. Converts seryl-tRNA(Sec) to selenocysteinyl-tRNA(Sec) required for selenoprotein biosynthesis. The chain is L-seryl-tRNA(Sec) selenium transferase from Edwardsiella ictaluri (strain 93-146).